Reading from the N-terminus, the 539-residue chain is Membrane protein insertase YidC (539 aa).

The chain crosses the membrane as a helical span at residues 7-27; the sequence is IIAIALSFVVLVGWSYLADHM. The segment at 32–64 is disordered; sequence QPAPQAQQEETAPSASQAAPQSASQAAAPAPRA. 3 consecutive transmembrane segments (helical) span residues 347–367, 418–438, and 498–518; these read YVGNYGVAIILLTVVIKLVFW, GGCLPMLVQIPVFFGLYQALL, and IMMFMPVVFTFMFLSFPSGLV.

This sequence belongs to the OXA1/ALB3/YidC family. Type 1 subfamily. As to quaternary structure, interacts with the Sec translocase complex via SecD. Specifically interacts with transmembrane segments of nascent integral membrane proteins during membrane integration.

Its subcellular location is the cell inner membrane. Required for the insertion and/or proper folding and/or complex formation of integral membrane proteins into the membrane. Involved in integration of membrane proteins that insert both dependently and independently of the Sec translocase complex, as well as at least some lipoproteins. Aids folding of multispanning membrane proteins. In Nitratidesulfovibrio vulgaris (strain DSM 19637 / Miyazaki F) (Desulfovibrio vulgaris), this protein is Membrane protein insertase YidC.